The chain runs to 1241 residues: ATP-dependent helicase/nuclease subunit A (1241 aa).

A UvrD-like helicase ATP-binding domain is found at 12-485 (SQWTDDQWKA…IDLAKNFRSR (474 aa)). ATP is bound at residue 33-40 (AAAGSGKT). The UvrD-like helicase C-terminal domain occupies 505–805 (GEIDYDADAE…RIMTIHKSKG (301 aa)).

It belongs to the helicase family. AddA subfamily. Heterodimer of AddA and AddB/RexB. Mg(2+) is required as a cofactor.

The enzyme catalyses Couples ATP hydrolysis with the unwinding of duplex DNA by translocating in the 3'-5' direction.. It catalyses the reaction ATP + H2O = ADP + phosphate + H(+). The heterodimer acts as both an ATP-dependent DNA helicase and an ATP-dependent, dual-direction single-stranded exonuclease. Recognizes the chi site generating a DNA molecule suitable for the initiation of homologous recombination. The AddA nuclease domain is required for chi fragment generation; this subunit has the helicase and 3' -&gt; 5' nuclease activities. This is ATP-dependent helicase/nuclease subunit A from Bacillus cereus (strain Q1).